A 420-amino-acid polypeptide reads, in one-letter code: Glutamate dehydrogenase (420 aa).

Residue Lys-105 is part of the active site. Position 220–226 (220–226) interacts with NAD(+); sequence GYGNAGY.

Belongs to the Glu/Leu/Phe/Val dehydrogenases family. In terms of assembly, homohexamer.

Its subcellular location is the cytoplasm. It catalyses the reaction L-glutamate + NAD(+) + H2O = 2-oxoglutarate + NH4(+) + NADH + H(+). The enzyme catalyses L-glutamate + NADP(+) + H2O = 2-oxoglutarate + NH4(+) + NADPH + H(+). The sequence is that of Glutamate dehydrogenase (gdhA) from Pyrococcus furiosus (strain ATCC 43587 / DSM 3638 / JCM 8422 / Vc1).